Reading from the N-terminus, the 141-residue chain is Large ribosomal subunit protein uL11 (141 aa).

Belongs to the universal ribosomal protein uL11 family. As to quaternary structure, part of the ribosomal stalk of the 50S ribosomal subunit. Interacts with L10 and the large rRNA to form the base of the stalk. L10 forms an elongated spine to which L12 dimers bind in a sequential fashion forming a multimeric L10(L12)X complex. One or more lysine residues are methylated.

In terms of biological role, forms part of the ribosomal stalk which helps the ribosome interact with GTP-bound translation factors. This chain is Large ribosomal subunit protein uL11, found in Chlorobaculum tepidum (strain ATCC 49652 / DSM 12025 / NBRC 103806 / TLS) (Chlorobium tepidum).